We begin with the raw amino-acid sequence, 1137 residues long: Bone sialoprotein-binding protein (1137 aa).

The first 52 residues, 1-52 (MINRDNKKAITKKGMISNRLNKFSIRKYTVGTASILVGTTLIFGLGNQEAKA), serve as a signal peptide directing secretion. The tract at residues 53 to 601 (AENTSTENAK…GDGTVKPEEK (549 aa)) is ligand binding A region. Disordered regions lie at residues 54–249 (ENTS…TAPT) and 675–697 (LPTKENGTTDGEKDSNGSSVTVK). The segment covering 61 to 75 (AKQDEASASDNKEVV) has biased composition (basic and acidic residues). Residues 77 to 89 (ETENNSTQKNDLT) are compositionally biased toward polar residues. A compositionally biased stretch (basic and acidic residues) spans 92-106 (IKKETNTDSHQEAKE). Residues 109-126 (TTSSTQQQQNNATTSTET) are compositionally biased toward low complexity. Positions 130–145 (NIEKENVKPSTDKTAT) are enriched in basic and acidic residues. The segment covering 158 to 207 (PNNTNNDVTTKPSTSEIQTTPTTPQESTNIENSQPQPTPSKVDNQVTDAT) has biased composition (polar residues). Over residues 216 to 241 (SKEELKNNPEKLKELVRNDSNTDRST) the composition is skewed to basic and acidic residues. 3 consecutive CNA-B domains span residues 602 to 714 (LYKI…YKEP), 715 to 824 (KYNL…YKTP), and 825 to 935 (KYSL…EEDT). Residues 896–1112 (TQTGTNTTED…TGSENNGSNN (217 aa)) are disordered. Composition is skewed to acidic residues over residues 903 to 913 (TEDDKDADGGE) and 930 to 1076 (YFEE…DSDS). An LPXTG sorting signal motif is present at residues 1100 to 1104 (LPETG). Thr1103 is modified (pentaglycyl murein peptidoglycan amidated threonine). The propeptide at 1104–1137 (GSENNGSNNATLFGGLFAALGSLLLFGRRKKQNK) is removed by sortase.

Belongs to the serine-aspartate repeat-containing protein (SDr) family.

It localises to the secreted. It is found in the cell wall. Specifically interacts with bone sialoprotein (BSP), a glycoprotein of bone and dentin extracellular matrix. Could contribute to staphylococcal osteomyelitis and arthritis. This Staphylococcus aureus (strain MRSA252) protein is Bone sialoprotein-binding protein (bbp).